We begin with the raw amino-acid sequence, 204 residues long: ATP synthase subunit b 2 (204 aa).

The chain crosses the membrane as a helical span at residues 50 to 70; that stretch reads IFWLAVTFGLLLFLMSKVALP.

It belongs to the ATPase B chain family. In terms of assembly, F-type ATPases have 2 components, F(1) - the catalytic core - and F(0) - the membrane proton channel. F(1) has five subunits: alpha(3), beta(3), gamma(1), delta(1), epsilon(1). F(0) has three main subunits: a(1), b(2) and c(10-14). The alpha and beta chains form an alternating ring which encloses part of the gamma chain. F(1) is attached to F(0) by a central stalk formed by the gamma and epsilon chains, while a peripheral stalk is formed by the delta and b chains.

Its subcellular location is the cell inner membrane. Functionally, f(1)F(0) ATP synthase produces ATP from ADP in the presence of a proton or sodium gradient. F-type ATPases consist of two structural domains, F(1) containing the extramembraneous catalytic core and F(0) containing the membrane proton channel, linked together by a central stalk and a peripheral stalk. During catalysis, ATP synthesis in the catalytic domain of F(1) is coupled via a rotary mechanism of the central stalk subunits to proton translocation. Its function is as follows. Component of the F(0) channel, it forms part of the peripheral stalk, linking F(1) to F(0). The b'-subunit is a diverged and duplicated form of b found in plants and photosynthetic bacteria. The polypeptide is ATP synthase subunit b 2 (atpF2) (Rhodospirillum centenum (strain ATCC 51521 / SW)).